Reading from the N-terminus, the 464-residue chain is MTVKTRFAPSPTGYLHIGGVRTALFSWAFARHHKGEFLLRIEDTDLARSTAESVNIILDGMKWVGLNYDNADNVVYQTRRFDRYKEVIAELLEKGHAYYCYCSKEELEAMREKAEKEGTATYDRRWRPEAGKTLPEIPAGVQPVVRFKTPLDGVTRWADLVKGEISIPNEALDDLIIARSDGSPTYNFCVVVDDYDMGVTHVIRGDDHVNNTPKQINILKAIGATLPEYGHLPMILNEQGKKISKRSGDTVAITDFGAMGILPEAMLNYLARLGWAHGDDEFFTMEQFIEWFDLKDVSPSPSRMDLKKLYWINGEHIKITPNGKLAELVKPRLALRDIHETEKPALEDVLALVKDRAQDLNTLADECLYFYVKQTPTEADVQKHWDDEAAARMLRFAERLEGLEDWNAEAIHDLFKPFCDEEGIKMGKLGMPLRLAVCGTAKTPSVDAVLALIGKEEVLKRIRA.

The 'HIGH' region signature appears at 9-19; sequence PSPTGYLHIGG. Residues 242–246 carry the 'KMSKS' region motif; sequence KISKR. An ATP-binding site is contributed by lysine 245.

The protein belongs to the class-I aminoacyl-tRNA synthetase family. Glutamate--tRNA ligase type 1 subfamily. In terms of assembly, monomer.

The protein resides in the cytoplasm. The catalysed reaction is tRNA(Glu) + L-glutamate + ATP = L-glutamyl-tRNA(Glu) + AMP + diphosphate. Its function is as follows. Catalyzes the attachment of glutamate to tRNA(Glu) in a two-step reaction: glutamate is first activated by ATP to form Glu-AMP and then transferred to the acceptor end of tRNA(Glu). This chain is Glutamate--tRNA ligase, found in Neisseria meningitidis serogroup A / serotype 4A (strain DSM 15465 / Z2491).